A 121-amino-acid polypeptide reads, in one-letter code: Small ribosomal subunit protein uS11 (121 aa).

The protein belongs to the universal ribosomal protein uS11 family. As to quaternary structure, part of the 30S ribosomal subunit. Interacts with proteins S7 and S18. Binds to IF-3.

Its function is as follows. Located on the platform of the 30S subunit, it bridges several disparate RNA helices of the 16S rRNA. Forms part of the Shine-Dalgarno cleft in the 70S ribosome. In Ureaplasma parvum serovar 3 (strain ATCC 27815 / 27 / NCTC 11736), this protein is Small ribosomal subunit protein uS11.